The following is a 212-amino-acid chain: Putative protein phosphatase 2C 53 (212 aa).

The 208-residue stretch at 1-208 folds into the PPM-type phosphatase domain; sequence MEDRFSAITN…DDISVMLIPL (208 aa). Aspartate 199 lines the Mn(2+) pocket.

It belongs to the PP2C family. Requires Mg(2+) as cofactor. The cofactor is Mn(2+).

It catalyses the reaction O-phospho-L-seryl-[protein] + H2O = L-seryl-[protein] + phosphate. The catalysed reaction is O-phospho-L-threonyl-[protein] + H2O = L-threonyl-[protein] + phosphate. The protein is Putative protein phosphatase 2C 53 of Arabidopsis thaliana (Mouse-ear cress).